A 291-amino-acid polypeptide reads, in one-letter code: Nucleotide-binding protein lhv_0732 (291 aa).

13–20 (GMSGAGKT) contributes to the ATP binding site. 61-64 (DLRV) contacts GTP.

Belongs to the RapZ-like family.

Its function is as follows. Displays ATPase and GTPase activities. The sequence is that of Nucleotide-binding protein lhv_0732 from Lactobacillus helveticus (strain DPC 4571).